Here is a 119-residue protein sequence, read N- to C-terminus: Large ribosomal subunit protein uL22c (119 aa).

This sequence belongs to the universal ribosomal protein uL22 family. As to quaternary structure, part of the 50S ribosomal subunit.

Its subcellular location is the plastid. It is found in the chloroplast. Its function is as follows. This protein binds specifically to 23S rRNA. In terms of biological role, the globular domain of the protein is located near the polypeptide exit tunnel on the outside of the subunit, while an extended beta-hairpin is found that lines the wall of the exit tunnel in the center of the 70S ribosome. The sequence is that of Large ribosomal subunit protein uL22c (rpl22) from Marchantia polymorpha (Common liverwort).